The sequence spans 477 residues: Protoporphyrinogen oxidase (477 aa).

Residues 9-14, Trp-42, 57-60, Val-257, Ala-449, and 454-456 contribute to the FAD site; these read GGGISG, GPRG, and VAV.

It belongs to the protoporphyrinogen/coproporphyrinogen oxidase family. Protoporphyrinogen oxidase subfamily. Monomer. Homodimer. The cofactor is FAD. Detected in liver (at protein level).

Its subcellular location is the mitochondrion inner membrane. The catalysed reaction is protoporphyrinogen IX + 3 O2 = protoporphyrin IX + 3 H2O2. It functions in the pathway porphyrin-containing compound metabolism; protoporphyrin-IX biosynthesis; protoporphyrin-IX from protoporphyrinogen-IX: step 1/1. Its function is as follows. Catalyzes the 6-electron oxidation of protoporphyrinogen-IX to form protoporphyrin-IX. In Bos taurus (Bovine), this protein is Protoporphyrinogen oxidase (PPOX).